Reading from the N-terminus, the 290-residue chain is Fat storage-inducing transmembrane protein 1 (290 aa).

Helical transmembrane passes span 1–21 (MFLNSILVVITDLAAGLLGNT), 26–46 (HFHLLLSALLLFGPLLSLWVS), 65–85 (SGWGWTCIFVGSFVFVLSFSV), 173–193 (LLLCLCCLLLAEETAVFGPYL), and 205–225 (ILFLFCVLLLSLWVFLLLCLL).

The protein belongs to the FIT family. FIT1 subfamily.

The protein localises to the endoplasmic reticulum membrane. In terms of biological role, may play an important role in the formation of lipid droplets (LDs) which are storage organelles at the center of lipid and energy homeostasis. May directly bind to diacylglycerol (DAGs) and triacylglycerol. This chain is Fat storage-inducing transmembrane protein 1 (fitm1l), found in Danio rerio (Zebrafish).